The primary structure comprises 443 residues: Tol-Pal system protein TolB (443 aa).

An N-terminal signal peptide occupies residues 1 to 33 (MKIGIINTKIRTVFSAFACMIAASLVCTMPARA).

This sequence belongs to the TolB family. As to quaternary structure, the Tol-Pal system is composed of five core proteins: the inner membrane proteins TolA, TolQ and TolR, the periplasmic protein TolB and the outer membrane protein Pal. They form a network linking the inner and outer membranes and the peptidoglycan layer.

Its subcellular location is the periplasm. In terms of biological role, part of the Tol-Pal system, which plays a role in outer membrane invagination during cell division and is important for maintaining outer membrane integrity. This Brucella suis (strain ATCC 23445 / NCTC 10510) protein is Tol-Pal system protein TolB.